The chain runs to 274 residues: Diaminopimelate epimerase (274 aa).

Residues N11, Q44, and N64 each coordinate substrate. C73 (proton donor) is an active-site residue. Residues 74–75 (GN), N157, N190, and 208–209 (ER) each bind substrate. The active-site Proton acceptor is C217. 218-219 (GS) is a substrate binding site.

Belongs to the diaminopimelate epimerase family. Homodimer.

Its subcellular location is the cytoplasm. It catalyses the reaction (2S,6S)-2,6-diaminopimelate = meso-2,6-diaminopimelate. It participates in amino-acid biosynthesis; L-lysine biosynthesis via DAP pathway; DL-2,6-diaminopimelate from LL-2,6-diaminopimelate: step 1/1. In terms of biological role, catalyzes the stereoinversion of LL-2,6-diaminopimelate (L,L-DAP) to meso-diaminopimelate (meso-DAP), a precursor of L-lysine and an essential component of the bacterial peptidoglycan. The sequence is that of Diaminopimelate epimerase from Sodalis glossinidius (strain morsitans).